Consider the following 73-residue polypeptide: Probable cytochrome b-c1 complex subunit 8 (73 aa).

Over 1–42 (MGQASKVFGKQITYSVSPFQQKLFVNYFKNAIPHLRRGVKDN) the chain is Mitochondrial matrix. A helical transmembrane segment spans residues 43–60 (FFCSVPYFAALYITVNWA). Topologically, residues 61 to 73 (NETYHNEMKDHWY) are mitochondrial intermembrane.

The protein belongs to the UQCRQ/QCR8 family. As to quaternary structure, component of the ubiquinol-cytochrome c oxidoreductase (cytochrome b-c1 complex, complex III, CIII), a multisubunit enzyme composed of 3 respiratory subunits cytochrome b, cytochrome c1 and Rieske protein, 2 core protein subunits, and additional low-molecular weight protein subunits. The complex exists as an obligatory dimer and forms supercomplexes (SCs) in the inner mitochondrial membrane with cytochrome c oxidase (complex IV, CIV).

The protein localises to the mitochondrion inner membrane. In terms of biological role, component of the ubiquinol-cytochrome c oxidoreductase, a multisubunit transmembrane complex that is part of the mitochondrial electron transport chain which drives oxidative phosphorylation. The respiratory chain contains 3 multisubunit complexes succinate dehydrogenase (complex II, CII), ubiquinol-cytochrome c oxidoreductase (cytochrome b-c1 complex, complex III, CIII) and cytochrome c oxidase (complex IV, CIV), that cooperate to transfer electrons derived from NADH and succinate to molecular oxygen, creating an electrochemical gradient over the inner membrane that drives transmembrane transport and the ATP synthase. The cytochrome b-c1 complex catalyzes electron transfer from ubiquinol to cytochrome c, linking this redox reaction to translocation of protons across the mitochondrial inner membrane, with protons being carried across the membrane as hydrogens on the quinol. In the process called Q cycle, 2 protons are consumed from the matrix, 4 protons are released into the intermembrane space and 2 electrons are passed to cytochrome c. The chain is Probable cytochrome b-c1 complex subunit 8 from Dictyostelium discoideum (Social amoeba).